A 93-amino-acid chain; its full sequence is Small ribosomal subunit protein bS18 (93 aa).

This sequence belongs to the bacterial ribosomal protein bS18 family. Part of the 30S ribosomal subunit. Forms a tight heterodimer with protein bS6.

Functionally, binds as a heterodimer with protein bS6 to the central domain of the 16S rRNA, where it helps stabilize the platform of the 30S subunit. This chain is Small ribosomal subunit protein bS18, found in Variovorax paradoxus (strain S110).